Consider the following 474-residue polypeptide: Probable glycine dehydrogenase (decarboxylating) subunit 2 (474 aa).

Lys262 is modified (N6-(pyridoxal phosphate)lysine).

It belongs to the GcvP family. C-terminal subunit subfamily. In terms of assembly, the glycine cleavage system is composed of four proteins: P, T, L and H. In this organism, the P 'protein' is a heterodimer of two subunits. Pyridoxal 5'-phosphate serves as cofactor.

It carries out the reaction N(6)-[(R)-lipoyl]-L-lysyl-[glycine-cleavage complex H protein] + glycine + H(+) = N(6)-[(R)-S(8)-aminomethyldihydrolipoyl]-L-lysyl-[glycine-cleavage complex H protein] + CO2. Its function is as follows. The glycine cleavage system catalyzes the degradation of glycine. The P protein binds the alpha-amino group of glycine through its pyridoxal phosphate cofactor; CO(2) is released and the remaining methylamine moiety is then transferred to the lipoamide cofactor of the H protein. This Thermotoga petrophila (strain ATCC BAA-488 / DSM 13995 / JCM 10881 / RKU-1) protein is Probable glycine dehydrogenase (decarboxylating) subunit 2.